A 295-amino-acid polypeptide reads, in one-letter code: Iodotyrosine deiodinase (295 aa).

Residues 3 to 23 form a helical membrane-spanning segment; the sequence is VFSSLTPVFVAVLCVIIGFLF. A disordered region spans residues 29–81; it reads KESRSKQKPSDQTARPWVDEDLQDDTEISTKDNEENNEDWMDTTDEENLPHVP. Over residues 63–75 the composition is skewed to acidic residues; it reads ENNEDWMDTTDEE. FMN contacts are provided by residues 106-110, S134, and 134-135; these read RRSVR and SG. 3-iodo-L-tyrosine is bound by residues A136, E163, Y167, and K188. FMN contacts are provided by residues 243–245 and R285; that span reads TTT.

This sequence belongs to the nitroreductase family. FMN is required as a cofactor.

The protein localises to the membrane. It catalyses the reaction 2 iodide + L-tyrosine + 2 NADP(+) = 3,5-diiodo-L-tyrosine + 2 NADPH + H(+). It carries out the reaction iodide + L-tyrosine + NADP(+) = 3-iodo-L-tyrosine + NADPH. The catalysed reaction is 3-iodo-L-tyrosine + iodide + NADP(+) = 3,5-diiodo-L-tyrosine + NADPH + H(+). The enzyme catalyses L-tyrosine + chloride + NADP(+) = 3-chloro-L-tyrosine + NADPH. It catalyses the reaction bromide + L-tyrosine + NADP(+) = 3-bromo-L-tyrosine + NADPH. Catalyzes the dehalogenation of halotyrosines such as 3,5-diiodo-L-tyrosine. Likely to also catalyze the dehalogenation of other halotyrosines such as 3-bromo-L-tyrosine, 3-chloro-L-tyrosine and 3-iodo-L-tyrosine. In Danio rerio (Zebrafish), this protein is Iodotyrosine deiodinase (iyd).